Consider the following 548-residue polypeptide: Nodulation protein NolO (548 aa).

Belongs to the NodU/CmcH family.

Functionally, involved in 6-O-carbamoylation of Nod-factors. The polypeptide is Nodulation protein NolO (nolO) (Bradyrhizobium diazoefficiens (strain JCM 10833 / BCRC 13528 / IAM 13628 / NBRC 14792 / USDA 110)).